Here is a 488-residue protein sequence, read N- to C-terminus: Calcium/calmodulin-dependent protein kinase type II subunit delta (488 aa).

An N-acetylalanine modification is found at alanine 2. The region spanning 14 to 272 (YQLFEELGKG…ASEALKHPWI (259 aa)) is the Protein kinase domain. ATP is bound by residues 20 to 28 (LGKGAFSVV) and lysine 43. Catalysis depends on aspartate 136, which acts as the Proton acceptor. The interval 283-292 (HRQETVDCLK) is autoinhibitory domain. Threonine 287 carries the phosphothreonine; by autocatalysis modification. The interval 291 to 301 (LKKFNARRKLK) is calmodulin-binding. A phosphothreonine; by autocatalysis mark is found at threonine 306 and threonine 307. At serine 315 the chain carries Phosphoserine. At lysine 317 the chain carries N6-acetyllysine. Serine 318 and serine 340 each carry phosphoserine. The tract at residues 325–350 (GVKKRKSSSSVQMMESTESSNTTIED) is disordered. Residues 332 to 347 (SSSVQMMESTESSNTT) are compositionally biased toward polar residues. A Phosphothreonine modification is found at threonine 341. Position 343 is a phosphoserine (serine 343). 2 positions are modified to phosphothreonine: threonine 346 and threonine 347. Serine 414 carries the phosphoserine modification.

It belongs to the protein kinase superfamily. CAMK Ser/Thr protein kinase family. CaMK subfamily. In terms of assembly, CAMK2 is composed of 4 different chains: alpha (CAMK2A), beta (CAMK2B), gamma (CAMK2G), and delta (CAMK2D). The different isoforms assemble into homo- or heteromultimeric holoenzymes composed of 12 subunits with two hexameric rings stacked one on top of the other. Interacts with RRAD and CACNB2. Post-translationally, autophosphorylation of Thr-287 following activation by Ca(2+)/calmodulin. Phosphorylation of Thr-287 locks the kinase into an activated state.

It is found in the cell membrane. Its subcellular location is the sarcolemma. It localises to the sarcoplasmic reticulum membrane. The enzyme catalyses L-seryl-[protein] + ATP = O-phospho-L-seryl-[protein] + ADP + H(+). The catalysed reaction is L-threonyl-[protein] + ATP = O-phospho-L-threonyl-[protein] + ADP + H(+). With respect to regulation, activated by Ca(2+)/calmodulin. Binding of calmodulin results in conformational change that relieves intrasteric autoinhibition and allows autophosphorylation of Thr-287 which turns the kinase in a constitutively active form and confers to the kinase a Ca(2+)-independent activity. Its function is as follows. Calcium/calmodulin-dependent protein kinase involved in the regulation of Ca(2+) homeostatis and excitation-contraction coupling (ECC) in heart by targeting ion channels, transporters and accessory proteins involved in Ca(2+) influx into the myocyte, Ca(2+) release from the sarcoplasmic reticulum (SR), SR Ca(2+) uptake and Na(+) and K(+) channel transport. Targets also transcription factors and signaling molecules to regulate heart function. In its activated form, is involved in the pathogenesis of dilated cardiomyopathy and heart failure. Contributes to cardiac decompensation and heart failure by regulating SR Ca(2+) release via direct phosphorylation of RYR2 Ca(2+) channel on 'Ser-2808'. In the nucleus, phosphorylates the MEF2 repressor HDAC4, promoting its nuclear export and binding to 14-3-3 protein, and expression of MEF2 and genes involved in the hypertrophic program. Is essential for left ventricular remodeling responses to myocardial infarction. In pathological myocardial remodeling acts downstream of the beta adrenergic receptor signaling cascade to regulate key proteins involved in ECC. Regulates Ca(2+) influx to myocytes by binding and phosphorylating the L-type Ca(2+) channel subunit beta-2 CACNB2. In addition to Ca(2+) channels, can target and regulate the cardiac sarcolemmal Na(+) channel Nav1.5/SCN5A and the K+ channel Kv4.3/KCND3, which contribute to arrhythmogenesis in heart failure. Phosphorylates phospholamban (PLN/PLB), an endogenous inhibitor of SERCA2A/ATP2A2, contributing to the enhancement of SR Ca(2+) uptake that may be important in frequency-dependent acceleration of relaxation (FDAR) and maintenance of contractile function during acidosis. May participate in the modulation of skeletal muscle function in response to exercise, by regulating SR Ca(2+) transport through phosphorylation of PLN/PLB and triadin, a ryanodine receptor-coupling factor. In response to interferon-gamma (IFN-gamma) stimulation, catalyzes phosphorylation of STAT1, stimulating the JAK-STAT signaling pathway. The sequence is that of Calcium/calmodulin-dependent protein kinase type II subunit delta (CAMK2D) from Bos taurus (Bovine).